The primary structure comprises 331 residues: Lipoyl synthase (331 aa).

Residues C57, C62, C68, C83, C87, C90, and S294 each contribute to the [4Fe-4S] cluster site. One can recognise a Radical SAM core domain in the interval 69-283 (WEDREATFLI…KAEAEAIGFL (215 aa)).

The protein belongs to the radical SAM superfamily. Lipoyl synthase family. [4Fe-4S] cluster is required as a cofactor.

Its subcellular location is the cytoplasm. It carries out the reaction [[Fe-S] cluster scaffold protein carrying a second [4Fe-4S](2+) cluster] + N(6)-octanoyl-L-lysyl-[protein] + 2 oxidized [2Fe-2S]-[ferredoxin] + 2 S-adenosyl-L-methionine + 4 H(+) = [[Fe-S] cluster scaffold protein] + N(6)-[(R)-dihydrolipoyl]-L-lysyl-[protein] + 4 Fe(3+) + 2 hydrogen sulfide + 2 5'-deoxyadenosine + 2 L-methionine + 2 reduced [2Fe-2S]-[ferredoxin]. It functions in the pathway protein modification; protein lipoylation via endogenous pathway; protein N(6)-(lipoyl)lysine from octanoyl-[acyl-carrier-protein]: step 2/2. Functionally, catalyzes the radical-mediated insertion of two sulfur atoms into the C-6 and C-8 positions of the octanoyl moiety bound to the lipoyl domains of lipoate-dependent enzymes, thereby converting the octanoylated domains into lipoylated derivatives. The protein is Lipoyl synthase of Clavibacter michiganensis subsp. michiganensis (strain NCPPB 382).